A 559-amino-acid chain; its full sequence is Nuclear speckle splicing regulatory protein 1 (559 aa).

The segment at 22–57 (VLQKPSVFGNDSDDDDDETSVSESLQREAAKKQAMK) is disordered. Phosphoserine occurs at positions 27 and 33. Over residues 32 to 41 (DSDDDDDETS) the composition is skewed to acidic residues. Residues 105 to 179 (IHNLLKAVEI…EARLDVTKQR (75 aa)) adopt a coiled-coil conformation. The necessary for alternative splicing activity stretch occupies residues 107 to 171 (NLLKAVEIRK…RERRAAALEA (65 aa)). The disordered stretch occupies residues 195–534 (EEEVPTCSFR…AKRSNEETVT (340 aa)). Basic and acidic residues predominate over residues 204–219 (REARSEIKEEKSKGYS). A Glycyl lysine isopeptide (Lys-Gly) (interchain with G-Cter in SUMO2) cross-link involves residue Lys211. 3 positions are modified to phosphoserine: Ser249, Ser255, and Ser256. Residues 251–274 (FDAKSSENDEMEGDKGNCRREKGT) are compositionally biased toward basic and acidic residues. The residue at position 276 (Thr276) is a Phosphothreonine. Residue Lys282 forms a Glycyl lysine isopeptide (Lys-Gly) (interchain with G-Cter in SUMO2) linkage. Composition is skewed to basic and acidic residues over residues 314–343 (EKRE…EKRD), 351–488 (SHRD…RNPE), and 502–521 (RITE…HETV). Residues 379-428 (KREKDREKYPSREQERHRQRNNYDRHNEKGCEKEEKSKEKEEHVKARKER) adopt a coiled-coil conformation. Phosphoserine is present on Ser458.

It belongs to the NSRP1 family. As to quaternary structure, interacts (via C-terminus) with SRSF1. Interacts (via C-terminus) with SRSF2.

The protein localises to the nucleus. The protein resides in the nucleus speckle. RNA-binding protein that mediates pre-mRNA alternative splicing regulation. The sequence is that of Nuclear speckle splicing regulatory protein 1 (NSRP1) from Bos taurus (Bovine).